The sequence spans 272 residues: MVKEISVGNVKIGGDRPLVLIAGPCVIENEVATMRCAERLMTICNGVSIPLIFKASYDKANRTSVNSFRGPGMKDGLKILKKVKEALGVPVLSDIHSIEQVEPAAEVLDVVQIPAFLCRQTDLVVAAARSGKVVNIKKGQFLAPWDMENVAGKAVSTGNDNIILTERGVSFGYNNLVSDMRSFPILRKIGYPVVFDATHSVQLPGGLGGSSGGQREFVEYLGRAAVATGIDGIFMEVHDDPEKALCDGPNSVKLEDLPALLKKLKAIDAIVK.

The protein belongs to the KdsA family.

The protein resides in the cytoplasm. It carries out the reaction D-arabinose 5-phosphate + phosphoenolpyruvate + H2O = 3-deoxy-alpha-D-manno-2-octulosonate-8-phosphate + phosphate. Its pathway is carbohydrate biosynthesis; 3-deoxy-D-manno-octulosonate biosynthesis; 3-deoxy-D-manno-octulosonate from D-ribulose 5-phosphate: step 2/3. The protein operates within bacterial outer membrane biogenesis; lipopolysaccharide biosynthesis. This Geotalea uraniireducens (strain Rf4) (Geobacter uraniireducens) protein is 2-dehydro-3-deoxyphosphooctonate aldolase.